Here is a 35-residue protein sequence, read N- to C-terminus: Photosystem II reaction center protein T (35 aa).

Residues 3–23 (ALVYTFLLVSTLGIIFFAIFF) traverse the membrane as a helical segment.

It belongs to the PsbT family. As to quaternary structure, PSII is composed of 1 copy each of membrane proteins PsbA, PsbB, PsbC, PsbD, PsbE, PsbF, PsbH, PsbI, PsbJ, PsbK, PsbL, PsbM, PsbT, PsbY, PsbZ, Psb30/Ycf12, at least 3 peripheral proteins of the oxygen-evolving complex and a large number of cofactors. It forms dimeric complexes.

The protein resides in the plastid. It localises to the chloroplast thylakoid membrane. Its function is as follows. Found at the monomer-monomer interface of the photosystem II (PS II) dimer, plays a role in assembly and dimerization of PSII. PSII is a light-driven water plastoquinone oxidoreductase, using light energy to abstract electrons from H(2)O, generating a proton gradient subsequently used for ATP formation. The protein is Photosystem II reaction center protein T of Ginkgo biloba (Ginkgo).